The sequence spans 279 residues: Tryptophan synthase alpha chain (279 aa).

Catalysis depends on proton acceptor residues E50 and D61.

This sequence belongs to the TrpA family. As to quaternary structure, tetramer of two alpha and two beta chains.

The enzyme catalyses (1S,2R)-1-C-(indol-3-yl)glycerol 3-phosphate + L-serine = D-glyceraldehyde 3-phosphate + L-tryptophan + H2O. It functions in the pathway amino-acid biosynthesis; L-tryptophan biosynthesis; L-tryptophan from chorismate: step 5/5. The alpha subunit is responsible for the aldol cleavage of indoleglycerol phosphate to indole and glyceraldehyde 3-phosphate. This Rhizobium meliloti (strain 1021) (Ensifer meliloti) protein is Tryptophan synthase alpha chain.